Consider the following 185-residue polypeptide: Mu-like prophage FluMu protein gp16 (185 aa).

It to phage Mu protein gp16.

The sequence is that of Mu-like prophage FluMu protein gp16 from Haemophilus influenzae (strain ATCC 51907 / DSM 11121 / KW20 / Rd).